The chain runs to 2034 residues: Sperm vesicle fusion protein fer-1 (2034 aa).

The disordered stretch occupies residues 1–80 (MTVKEKLLKV…GGSDIELLPD (80 aa)). Over 1 to 1998 (MTVKEKLLKV…CIKYFWHYYG (1998 aa)) the chain is Cytoplasmic. Acidic residues predominate over residues 66-79 (ELSDDGGSDIELLP). C2 domains follow at residues 229 to 367 (RIDE…YLPT), 954 to 1082 (DSED…PQWF), 1120 to 1246 (YKER…KSDH), and 1363 to 1484 (KKGK…ATGG). Residues 1563 to 1619 (QKAGKENFSDGSDQQNEDVSDGSWDEEDLEREKEKLKWEKHRSKGKPLKKVTTEKAE) are disordered. Acidic residues predominate over residues 1577-1591 (QNEDVSDGSWDEEDL). The segment covering 1600–1611 (WEKHRSKGKPLK) has biased composition (basic residues). In terms of domain architecture, C2 5 spans 1684–1831 (EYGAIPAPFN…EGIGSPSDVG (148 aa)). The interval 1953-1972 (QEPAGKKRSEPNHSPFLEKP) is disordered. The helical transmembrane segment at 1999–2019 (LQILLWLIIIVILILTIFVLL) threads the bilayer. Residues 2020–2034 (HTWPTILAEIIKAIF) are Extracellular-facing.

The protein belongs to the ferlin family. In terms of tissue distribution, exclusively expressed in the testis.

The protein resides in the membrane. In terms of biological role, required for the fusion of the membranous organelles (MOs) with the plasma membrane, a process essential in spermiogenesis. This chain is Sperm vesicle fusion protein fer-1 (fer-1), found in Caenorhabditis elegans.